The following is a 203-amino-acid chain: Glycerol-3-phosphate acyltransferase (203 aa).

The next 5 helical transmembrane spans lie at 5 to 25, 55 to 75, 84 to 104, 118 to 138, and 159 to 179; these read IYIAALVIGYLFGSIPFGLIL, LAAATLLLDALKGTAAVIVAA, IAANAAMLAALGAFLGHLFPV, IGVLIGLFWPAAVVFCIMWLA, and IFLWWFGHDSLASLFAVLTLL.

It belongs to the PlsY family. In terms of assembly, probably interacts with PlsX.

The protein localises to the cell inner membrane. The catalysed reaction is an acyl phosphate + sn-glycerol 3-phosphate = a 1-acyl-sn-glycero-3-phosphate + phosphate. It participates in lipid metabolism; phospholipid metabolism. Catalyzes the transfer of an acyl group from acyl-phosphate (acyl-PO(4)) to glycerol-3-phosphate (G3P) to form lysophosphatidic acid (LPA). This enzyme utilizes acyl-phosphate as fatty acyl donor, but not acyl-CoA or acyl-ACP. This chain is Glycerol-3-phosphate acyltransferase, found in Rhodopseudomonas palustris (strain ATCC BAA-98 / CGA009).